The sequence spans 403 residues: MTTSTSPAAMLLRRLRRLSWGSTAVQLFILTVVTFGLLAPLACHRLLHSYFYLRHWHLNQMSQDFLQQSLKEGEAALHYFEELPSANGSVPIVWQATPRPWLVITIITVDRQPGFHYVLQVVSQFHRLLQQCGPQCEGHQLFLCNVERSVSHFDAKLLSKYVPVANRYEGTEDDYGDDPSTNSFEKEKQDYVYCLESSLQTYNPDYVLMVEDDAIPEEQIFPVLEHLLRARFSEPHLQDALYLKLYHPERLQHYINPEPMRILEWVGVGMLLGPVLTWIYMRFACRPGFSWPVMLFFCLYSMGLVELVGRHYFLELRRLSPSLYSVVPASQCCTPAMLFPAPAARRTLTYLSQVYCHKGFGKDMALYSLLRAKGERAYVVEPNLVKHIGLFSSLRYNFHPSLL.

Topologically, residues 1–22 (MTTSTSPAAMLLRRLRRLSWGS) are cytoplasmic. Residues 23 to 43 (TAVQLFILTVVTFGLLAPLAC) form a helical membrane-spanning segment. Residues 44 to 264 (HRLLHSYFYL…INPEPMRILE (221 aa)) lie on the Lumenal side of the membrane. UDP-N-acetyl-alpha-D-galactosamine is bound at residue valine 109. 2 disulfides stabilise this stretch: cysteine 132–cysteine 136 and cysteine 144–cysteine 194. The DXD motif motif lies at 211–213 (EDD). A helical transmembrane segment spans residues 265–285 (WVGVGMLLGPVLTWIYMRFAC). Topologically, residues 286–287 (RP) are cytoplasmic. Residues 288–308 (GFSWPVMLFFCLYSMGLVELV) form a helical membrane-spanning segment. Residues 309 to 403 (GRHYFLELRR…LRYNFHPSLL (95 aa)) are Lumenal-facing. Cysteine 332 and cysteine 333 are joined by a disulfide. Residues threonine 334, proline 335, and lysine 362 each contribute to the UDP-N-acetyl-alpha-D-galactosamine site.

Belongs to the PGAP4 family. Post-translationally, glycosylated.

The protein resides in the golgi apparatus membrane. Its function is as follows. Golgi-resident glycosylphosphatidylinositol (GPI)-N-acetylgalactosamine transferase that catalyzes the N-acetyl-beta-D-galactosamine transfer from an UDP-N-acetyl-alpha-D-galactosamine to the 4-OH-position of first mannose of the glycosylphosphatidylinositol (GPI) of a GPI-anchored protein (GPI-AP). This modification occurs after the fatty acid remodeling step of the GPI-anchor maturation. The polypeptide is GPI-N-acetylgalactosamine transferase PGAP4 (Mus musculus (Mouse)).